Here is a 104-residue protein sequence, read N- to C-terminus: Large ribosomal subunit protein uL24 (104 aa).

It belongs to the universal ribosomal protein uL24 family. As to quaternary structure, part of the 50S ribosomal subunit.

One of two assembly initiator proteins, it binds directly to the 5'-end of the 23S rRNA, where it nucleates assembly of the 50S subunit. In terms of biological role, one of the proteins that surrounds the polypeptide exit tunnel on the outside of the subunit. The chain is Large ribosomal subunit protein uL24 from Buchnera aphidicola subsp. Schizaphis graminum (strain Sg).